The following is a 378-amino-acid chain: uncharacterized protein (378 aa).

A compositionally biased stretch (basic residues) spans 1 to 11 (MSPMNRQRKNK). The interval 1-23 (MSPMNRQRKNKSNVLNEKDERPG) is disordered.

This is an uncharacterized protein from Caenorhabditis elegans.